Reading from the N-terminus, the 173-residue chain is Glycine cleavage system H protein, mitochondrial (173 aa).

Residues 1–48 (MALRVVRSVRALLCTLRAVPSPAAPCPPRPWQLGVGAVRTLRTGPALL) constitute a mitochondrion transit peptide. The 83-residue stretch at 66-148 (IGTVGISNFA…YEDGWLIKMT (83 aa)) folds into the Lipoyl-binding domain. Lys107 bears the N6-lipoyllysine mark.

This sequence belongs to the GcvH family. As to quaternary structure, interacts with GLDC. The glycine cleavage system is composed of four proteins: P (GLDC), T (GCST), L (DLD) and H (GCSH). (R)-lipoate is required as a cofactor.

The protein localises to the mitochondrion. The glycine cleavage system catalyzes the degradation of glycine. The H protein (GCSH) shuttles the methylamine group of glycine from the P protein (GLDC) to the T protein (GCST). Has a pivotal role in the lipoylation of enzymes involved in cellular energetics such as the mitochondrial dihydrolipoyllysine-residue acetyltransferase component of pyruvate dehydrogenase complex (DLAT), and the mitochondrial dihydrolipoyllysine-residue succinyltransferase component of 2-oxoglutarate dehydrogenase complex (DLST). The protein is Glycine cleavage system H protein, mitochondrial of Homo sapiens (Human).